The sequence spans 672 residues: DNA ligase (672 aa).

NAD(+) is bound by residues Asp-34–Asp-38, Ser-83–Leu-84, and Glu-117. Lys-119 functions as the N6-AMP-lysine intermediate in the catalytic mechanism. Residues Arg-140, Glu-177, Lys-293, and Lys-317 each coordinate NAD(+). Zn(2+) contacts are provided by Cys-411, Cys-414, Cys-429, and Cys-434. A BRCT domain is found at Arg-591 to Thr-672.

This sequence belongs to the NAD-dependent DNA ligase family. LigA subfamily. The cofactor is Mg(2+). Requires Mn(2+) as cofactor.

The enzyme catalyses NAD(+) + (deoxyribonucleotide)n-3'-hydroxyl + 5'-phospho-(deoxyribonucleotide)m = (deoxyribonucleotide)n+m + AMP + beta-nicotinamide D-nucleotide.. In terms of biological role, DNA ligase that catalyzes the formation of phosphodiester linkages between 5'-phosphoryl and 3'-hydroxyl groups in double-stranded DNA using NAD as a coenzyme and as the energy source for the reaction. It is essential for DNA replication and repair of damaged DNA. The polypeptide is DNA ligase (Geotalea uraniireducens (strain Rf4) (Geobacter uraniireducens)).